Here is a 490-residue protein sequence, read N- to C-terminus: Polyamine oxidase 2 (490 aa).

4 residues coordinate FAD: Glu-57, Arg-65, Val-246, and Glu-433. The Microbody targeting signal motif lies at 488–490; the sequence is SRL.

This sequence belongs to the flavin monoamine oxidase family. It depends on FAD as a cofactor. In terms of tissue distribution, highly expressed in flowers and siliques. Also found in leaf and stem and in low levels in cotyledons, roots and in seedlings.

Its subcellular location is the peroxisome. It catalyses the reaction spermine + O2 + H2O = 3-aminopropanal + spermidine + H2O2. It carries out the reaction N(1)-acetylspermine + O2 + H2O = 3-acetamidopropanal + spermidine + H2O2. The catalysed reaction is spermidine + O2 + H2O = 3-aminopropanal + putrescine + H2O2. Its pathway is amine and polyamine degradation; spermine degradation. The protein operates within amine and polyamine degradation; spermidine degradation. In terms of biological role, flavoenzyme involved in polyamine back-conversion. Catalyzes the oxidation of the secondary amino group of polyamines, such as spermine, spermidine and their acetyl derivatives. Substrate preference is N(1)-acetylspermine &gt; spermine &gt; spermidine. Plays an important role in the regulation of polyamine intracellular concentration. Involved in abscisic acid-mediated developmental processes. May contribute to nitric oxide-mediated effects on root growth. This is Polyamine oxidase 2 from Arabidopsis thaliana (Mouse-ear cress).